Consider the following 259-residue polypeptide: Glucose-1-phosphate thymidylyltransferase (259 aa).

It belongs to the inositol monophosphatase superfamily.

The enzyme catalyses dTTP + alpha-D-glucose 1-phosphate + H(+) = dTDP-alpha-D-glucose + diphosphate. The protein operates within antibiotic biosynthesis; streptomycin biosynthesis. The chain is Glucose-1-phosphate thymidylyltransferase (strO) from Streptomyces griseus.